The primary structure comprises 426 residues: 3-phosphoshikimate 1-carboxyvinyltransferase (426 aa).

Residues Lys-22, Ser-23, and Arg-27 each contribute to the 3-phosphoshikimate site. Position 22 (Lys-22) interacts with phosphoenolpyruvate. Residues Gly-96 and Arg-124 each coordinate phosphoenolpyruvate. Residues Ser-170, Ser-171, Gln-172, Ser-198, Asp-314, Asn-337, and Lys-341 each coordinate 3-phosphoshikimate. Gln-172 provides a ligand contact to phosphoenolpyruvate. Asp-314 (proton acceptor) is an active-site residue. 3 residues coordinate phosphoenolpyruvate: Arg-345, Arg-387, and Lys-412.

It belongs to the EPSP synthase family. In terms of assembly, monomer.

The protein localises to the cytoplasm. It catalyses the reaction 3-phosphoshikimate + phosphoenolpyruvate = 5-O-(1-carboxyvinyl)-3-phosphoshikimate + phosphate. It functions in the pathway metabolic intermediate biosynthesis; chorismate biosynthesis; chorismate from D-erythrose 4-phosphate and phosphoenolpyruvate: step 6/7. Functionally, catalyzes the transfer of the enolpyruvyl moiety of phosphoenolpyruvate (PEP) to the 5-hydroxyl of shikimate-3-phosphate (S3P) to produce enolpyruvyl shikimate-3-phosphate and inorganic phosphate. The polypeptide is 3-phosphoshikimate 1-carboxyvinyltransferase (Shewanella piezotolerans (strain WP3 / JCM 13877)).